Here is a 500-residue protein sequence, read N- to C-terminus: NAD(P)H-quinone oxidoreductase chain 4, chloroplastic (500 aa).

15 consecutive transmembrane segments (helical) span residues 4–24, 35–55, 87–107, 113–130, 134–154, 167–187, 211–231, 242–262, 272–292, 305–325, 330–350, 364–384, 386–406, 411–431, and 462–482; these read FPWL…MLFL, YTIC…CYNF, IGTI…AFPV, LFHF…GSFS, LLLF…LLAM, FILY…GISL, ILFY…IPLH, HYST…YGLV, AHSM…IYAA, IAYS…SITD, GAIL…FLAG, MGGM…LSMA, LALP…GIIT, FLIF…LTPI, and LFLS…PDFV.

This sequence belongs to the complex I subunit 4 family.

The protein localises to the plastid. The protein resides in the chloroplast thylakoid membrane. It catalyses the reaction a plastoquinone + NADH + (n+1) H(+)(in) = a plastoquinol + NAD(+) + n H(+)(out). The enzyme catalyses a plastoquinone + NADPH + (n+1) H(+)(in) = a plastoquinol + NADP(+) + n H(+)(out). This chain is NAD(P)H-quinone oxidoreductase chain 4, chloroplastic, found in Capsella bursa-pastoris (Shepherd's purse).